We begin with the raw amino-acid sequence, 393 residues long: Staphopain B (393 aa).

The first 36 residues, 1-36 (MNSSYKSRVFNIISIIMVSMLILSLGAFANNNKAKA), serve as a signal peptide directing secretion. Positions 37–219 (DSHSKQLEIN…KVEENEAIQE (183 aa)) are excised as a propeptide. Active-site residues include cysteine 243, histidine 340, and asparagine 360.

It belongs to the peptidase C47 family. As to quaternary structure, in the cytoplasm, prematurely activated/folded SspB forms a stable non-covalent complex with SspC. Post-translationally, proteolytically cleaved by staphylococcal serine protease (SspA).

The protein localises to the secreted. Prematurely activated/folded staphopain B is inhibited by staphostatin B (SspC), which is probably required to protect staphylococcal cytoplasmic proteins from degradation by SspB. Functionally, cysteine protease that plays an important role in the inhibition of host innate immune response. Degrades host elastin, fibrogen, fibronectin and kininogen. Blocks phagocytosis of opsonised S.aureus by neutrophils and monocytes by inducing their death in a proteolytic activity-dependent manner. Decreases surface expression of the 'don't eat me' signal CD31 on neutrophils. Cleaves host galectin-3/LGALS3, thereby inhibiting the neutrophil-activating ability of the lectin. This is Staphopain B (sspB) from Staphylococcus aureus (strain Mu50 / ATCC 700699).